Reading from the N-terminus, the 237-residue chain is Putative N-acetylmannosamine-6-phosphate 2-epimerase (237 aa).

This sequence belongs to the NanE family.

The enzyme catalyses an N-acyl-D-glucosamine 6-phosphate = an N-acyl-D-mannosamine 6-phosphate. Its pathway is amino-sugar metabolism; N-acetylneuraminate degradation; D-fructose 6-phosphate from N-acetylneuraminate: step 3/5. Converts N-acetylmannosamine-6-phosphate (ManNAc-6-P) to N-acetylglucosamine-6-phosphate (GlcNAc-6-P). This Listeria monocytogenes serovar 1/2a (strain ATCC BAA-679 / EGD-e) protein is Putative N-acetylmannosamine-6-phosphate 2-epimerase.